Here is a 144-residue protein sequence, read N- to C-terminus: Aklanonic acid methyl ester cyclase AcmA (144 aa).

The substrate site is built by N51 and Q105.

Belongs to the polyketide cyclase DnrD family. In terms of assembly, homotetramer.

It catalyses the reaction methyl aklanonate = aklaviketone. It participates in antibiotic biosynthesis; daunorubicin biosynthesis. It functions in the pathway antibiotic biosynthesis; carminomycin biosynthesis. The protein operates within antibiotic biosynthesis; rhodomycin biosynthesis. Its pathway is antibiotic biosynthesis; aclacinomycin biosynthesis. Functionally, involved in the biosynthesis of aklavinone which is an important precursor common to the formation of the clinically significant anthracyclines such as carminomycin, daunorubicin (daunomycin), rhodomycin, aclacinomycin T (aklavin) and aclacinomycin A (aclarubicin). These compounds are aromatic polyketide antibiotics that exhibit high cytotoxicity and are widely applied in the chemotherapy of a variety of cancers. Catalyzes the cyclization of aklanonic acid methyl ester to yield aklaviketone. It is also able to use nogalonic acid methyl ester as substrate, but produces exclusively auraviketone with C9-R stereochemistry. This chain is Aklanonic acid methyl ester cyclase AcmA (acma), found in Streptomyces galilaeus.